The following is a 122-amino-acid chain: Large ribosomal subunit protein uL14c (122 aa).

Belongs to the universal ribosomal protein uL14 family. As to quaternary structure, part of the 50S ribosomal subunit.

It is found in the plastid. The protein resides in the chloroplast. Its function is as follows. Binds to 23S rRNA. The polypeptide is Large ribosomal subunit protein uL14c (Manihot esculenta (Cassava)).